The chain runs to 533 residues: Adenosine deaminase (533 aa).

The first 19 residues, 1–19 (MKILLAVVFVLNLTNLAVP), serve as a signal peptide directing secretion.

The protein belongs to the metallo-dependent hydrolases superfamily. Adenosine and AMP deaminases family. ADGF subfamily. Requires Zn(2+) as cofactor. In terms of processing, proteolytically cleaved by human mast cell tryptase and chymase. As to expression, female salivary gland (at protein level).

It is found in the secreted. The enzyme catalyses adenosine + H2O + H(+) = inosine + NH4(+). It carries out the reaction 2'-deoxyadenosine + H2O + H(+) = 2'-deoxyinosine + NH4(+). Catalyzes the deamination of adenosine to inosine and deoxyadenosine to deoxyinosine. Induces degranulation of host mast cells, and secretion of tryptase and IL6. Modulates enzymatic activities of human tryptase and chymase. Induces release of cytokines, such as IL1B, IL6, TNF, CCL2, IFN-beta (INFB1) and ISG15, from host monocytes and macrophages. Activates host NF-kappa-B signaling pathway in TAK1/MAP3K7-dependent manner. Functionally, (Microbial infection) Promotes replication of dengue virus type 2 in host cells probably via modulation of cytokine production in host macrophages and monocytes. This is Adenosine deaminase from Aedes albopictus (Asian tiger mosquito).